The sequence spans 272 residues: NAD kinase (272 aa).

Asp50 acts as the Proton acceptor in catalysis. NAD(+) contacts are provided by residues 50–51, 126–127, Arg152, Asp154, 165–170, and Ala189; these read DG, NE, and TAYNKS.

It belongs to the NAD kinase family. A divalent metal cation serves as cofactor.

The protein resides in the cytoplasm. It carries out the reaction NAD(+) + ATP = ADP + NADP(+) + H(+). Involved in the regulation of the intracellular balance of NAD and NADP, and is a key enzyme in the biosynthesis of NADP. Catalyzes specifically the phosphorylation on 2'-hydroxyl of the adenosine moiety of NAD to yield NADP. This Streptococcus pneumoniae (strain 70585) protein is NAD kinase.